The sequence spans 189 residues: Protein Rex (189 aa).

Residues 1–16 (MPKTRRRPRRSQRKRP) are compositionally biased toward basic residues. The tract at residues 1 to 27 (MPKTRRRPRRSQRKRPPTPWPTSQGLD) is disordered. Positions 2 to 18 (PKTRRRPRRSQRKRPPT) match the Nuclear localization signal, and RNA-binding (RxRE) motif. The tract at residues 56 to 70 (RPAYIVTPYWPPVQS) is homomultimerization. S70 carries the phosphoserine; by host modification. Positions 73 to 189 (SPGTPSMDAL…PPSPGPSCPT (117 aa)) are disordered. The span at 80-94 (DALSAQLYSSLSLDS) shows a compositional bias: low complexity. Residues 82–93 (LSAQLYSSLSLD) carry the Nuclear export signal motif. Residues 123 to 131 (PSSRPCANT) are homomultimerization. Over residues 143-164 (LGSTSQPCLFQTPDSGPKTCTP) the composition is skewed to polar residues. T174 carries the phosphothreonine; by host modification. The residue at position 177 (S177) is a Phosphoserine; by host. Over residues 178–189 (FPPPSPGPSCPT) the composition is skewed to pro residues.

It belongs to the deltaretrovirus Rex protein family. Homomultimer. Multimeric assembly is essential for activity and involves XPO1. Binds to human XPO1 and KPNB1. Interacts (via N-terminal nuclear localization signal) with human NPM1.

It is found in the host nucleus. The protein localises to the host nucleolus. It localises to the host cytoplasm. In terms of biological role, rex escorts unspliced gag-pro-pol and singly spliced env mRNAs out of the nucleus of infected cells. These mRNAs carry a recognition sequence called Rex responsive element (RxRE or XRE) located at the 3' region of the long terminal repeat (LTR). This function is essential since most HTLV proteins are translated from unspliced or partially spliced pre-mRNAs that cannot exit the nucleus by the pathway used by fully processed cellular mRNAs. Rex itself is translated from a fully spliced mRNA that probably readily exits the nucleus. Rex's nuclear localization signal (NLS) binds directly to KPNB1/importin beta-1 without previous binding to KPNA1/importin alpha-1. KPNB1 binds to the GDP bound form of RAN (Ran-GDP) and targets Rex to the nucleus. In the nucleus, the conversion from Ran-GDP to Ran-GTP dissociates Rex from KPNB1 and allows Rex's binding to the RRE in viral pre-mRNAs. Rex multimerizes on the RRE via cooperative assembly. This multimerization is critical for its full biological activity, since it may shield the viral RNA from being spliced or down-regulated, and probably exposes Rex's nuclear export signal (NES) to the surface. Rex can then form a complex with XPO1/CRM1, RANBP3 and Ran-GTP, leading to nuclear export of the complex. Conversion from Ran-GTP to Ran-GDP mediates dissociation of the Rex/RRE/XPO1/RANBP3/RAN complex, so that Rex can return to the nucleus for a subsequent round of export. The chain is Protein Rex from Human T-cell leukemia virus 1 (strain Japan ATK-1 subtype A) (HTLV-1).